We begin with the raw amino-acid sequence, 215 residues long: Glycerol-3-phosphate acyltransferase (215 aa).

The next 5 helical transmembrane spans lie at methionine 1–threonine 21, isoleucine 57–tryptophan 77, methionine 85–glycine 105, valine 126–leucine 146, and valine 165–leucine 185.

The protein belongs to the PlsY family. In terms of assembly, probably interacts with PlsX.

It localises to the cell inner membrane. It catalyses the reaction an acyl phosphate + sn-glycerol 3-phosphate = a 1-acyl-sn-glycero-3-phosphate + phosphate. Its pathway is lipid metabolism; phospholipid metabolism. Functionally, catalyzes the transfer of an acyl group from acyl-phosphate (acyl-PO(4)) to glycerol-3-phosphate (G3P) to form lysophosphatidic acid (LPA). This enzyme utilizes acyl-phosphate as fatty acyl donor, but not acyl-CoA or acyl-ACP. The protein is Glycerol-3-phosphate acyltransferase of Crocosphaera subtropica (strain ATCC 51142 / BH68) (Cyanothece sp. (strain ATCC 51142)).